Consider the following 473-residue polypeptide: Serine palmitoyltransferase 1 (473 aa).

Residues 1 to 15 (MATATEQWVLVEMVQ) lie on the Lumenal side of the membrane. Residues 1 to 66 (MATATEQWVL…KEELIEEWQP (66 aa)) are interaction with SPTLC2. A helical transmembrane segment spans residues 16 to 36 (ALYEAPAYHLILEGILILWII). Residues 37–473 (RLLFSKTYKL…IKEVAQAVLL (437 aa)) lie on the Cytoplasmic side of the membrane. Tyrosine 164 is modified (phosphotyrosine; by ABL).

The protein belongs to the class-II pyridoxal-phosphate-dependent aminotransferase family. As to quaternary structure, component of the serine palmitoyltransferase (SPT) complex, which is also composed of SPTLC2 or SPTLC3 and SPTSSA or SPTSSB. The heterodimer with SPTLC2 or SPTLC3 forms the catalytic core of the enzyme, while SPTSSA or SPTSSB subunits determine substrate specificity. SPT also interacts with ORMDL proteins, especially ORMDL3, which negatively regulate SPT activity in the presence of ceramides. Forms dimers of heterodimers with SPTLC2. Interacts with RTN4. Requires pyridoxal 5'-phosphate as cofactor. Phosphorylation at Tyr-164 inhibits activity and promotes cell survival.

It localises to the endoplasmic reticulum membrane. The catalysed reaction is L-serine + hexadecanoyl-CoA + H(+) = 3-oxosphinganine + CO2 + CoA. It catalyses the reaction octadecanoyl-CoA + L-serine + H(+) = 3-oxoeicosasphinganine + CO2 + CoA. It carries out the reaction tetradecanoyl-CoA + L-serine + H(+) = 3-oxohexadecasphinganine + CO2 + CoA. The enzyme catalyses dodecanoyl-CoA + L-serine + H(+) = 3-oxotetradecasphinganine + CO2 + CoA. It participates in lipid metabolism; sphingolipid metabolism. With respect to regulation, SPT complex catalytic activity is negatively regulated by ORMDL proteins, including ORMDL3, in the presence of ceramides. This mechanism allows to maintain ceramide levels at sufficient concentrations for the production of complex sphingolipids, but which prevents the accumulation of ceramides to levels that trigger apoptosis. Its function is as follows. Component of the serine palmitoyltransferase multisubunit enzyme (SPT) that catalyzes the initial and rate-limiting step in sphingolipid biosynthesis by condensing L-serine and activated acyl-CoA (most commonly palmitoyl-CoA) to form long-chain bases. The SPT complex is also composed of SPTLC2 or SPTLC3 and SPTSSA or SPTSSB. Within this complex, the heterodimer with SPTLC2 or SPTLC3 forms the catalytic core. The composition of the serine palmitoyltransferase (SPT) complex determines the substrate preference. The SPTLC1-SPTLC2-SPTSSA complex shows a strong preference for C16-CoA substrate, while the SPTLC1-SPTLC3-SPTSSA isozyme uses both C14-CoA and C16-CoA as substrates, with a slight preference for C14-CoA. The SPTLC1-SPTLC2-SPTSSB complex shows a strong preference for C18-CoA substrate, while the SPTLC1-SPTLC3-SPTSSB isozyme displays an ability to use a broader range of acyl-CoAs, without apparent preference. Required for adipocyte cell viability and metabolic homeostasis. This is Serine palmitoyltransferase 1 (SPTLC1) from Macaca fascicularis (Crab-eating macaque).